The primary structure comprises 225 residues: Protein YIP4 (225 aa).

Residues Ser27 and Ser28 each carry the phosphoserine modification. 5 consecutive transmembrane segments (helical) span residues 91–111 (WDLW…ALST), 118–138 (SVFT…SLNI), 154–176 (LGYS…LIFI), 180–199 (VIVA…LQNS), and 205–225 (KLLA…IIFL).

This sequence belongs to the YIP1 family. As to quaternary structure, interacts with the YIP1 family members yip1 and yip5, and with several Rab GTPases.

Its subcellular location is the membrane. In terms of biological role, may be involved in proper membrane localization of Rab GTPases. The sequence is that of Protein YIP4 from Schizosaccharomyces pombe (strain 972 / ATCC 24843) (Fission yeast).